A 227-amino-acid polypeptide reads, in one-letter code: MQLCVALDLEKKEDNLSLLQELKGLDLWAKVGLRSFIRDGAVFLDEIRKIDGNFKIFLDLKLYDIPYTMANAALECAKLEVDMLTVHLSSAKSALTILMQRLNALKKRPLIMGVSALTSFSEEEFLSVYNAPLKTQAIKLSVMGKESGIDGVVCSVFESLAIKEALGKDFLTLTPGIRLNKNDKEDQERVANAKEAKQNLSDFIVVGRPIYQAKEPREVVLELLKDC.

Substrate is bound by residues aspartate 8, lysine 30, 59-68 (DLKLYDIPYT), threonine 118, arginine 178, glutamine 187, glycine 207, and arginine 208. The Proton donor role is filled by lysine 61.

It belongs to the OMP decarboxylase family. Type 1 subfamily. Homodimer.

It catalyses the reaction orotidine 5'-phosphate + H(+) = UMP + CO2. It participates in pyrimidine metabolism; UMP biosynthesis via de novo pathway; UMP from orotate: step 2/2. In terms of biological role, catalyzes the decarboxylation of orotidine 5'-monophosphate (OMP) to uridine 5'-monophosphate (UMP). The chain is Orotidine 5'-phosphate decarboxylase from Helicobacter pylori (strain Shi470).